Consider the following 351-residue polypeptide: Probable sugar phosphate/phosphate translocator At5g11230 (351 aa).

10 helical membrane passes run Ile15–Tyr35, Phe49–Ile69, Val89–Tyr109, Ser113–Phe133, Asp141–Ala161, Val165–Ile185, Val205–Leu225, Ala236–Val256, Thr263–Ile283, and Thr286–Asn306. The region spanning Tyr38–Ala156 is the EamA domain. The segment at Lys321–Asn351 is disordered.

The protein belongs to the TPT transporter family. TPT (TC 2.A.7.9) subfamily.

It localises to the membrane. This is Probable sugar phosphate/phosphate translocator At5g11230 from Arabidopsis thaliana (Mouse-ear cress).